The following is a 700-amino-acid chain: Cap-specific mRNA (nucleoside-2'-O-)-methyltransferase 2 (700 aa).

Positions 1-21 are disordered; sequence MSFRSSPQGKPHPMTDYQSIR. The 213-residue stretch at 109–321 folds into the Adrift-type SAM-dependent 2'-O-MTase domain; the sequence is EFVTVAWCKL…VYVICLNYNK (213 aa). The active site involves K117. S-adenosyl-L-methionine-binding residues include G143, W164, and D234. The active site involves D234. Residue K274 is the Proton acceptor of the active site.

It localises to the nucleus. It carries out the reaction a 5'-end (N(7)-methyl 5'-triphosphoguanosine)-(2'-O-methyl-ribonucleoside)-(ribonucleotide) in mRNA + S-adenosyl-L-methionine = a 5'-end (N(7)-methyl 5'-triphosphoguanosine)-(2'-O-methyl-ribonucleoside)-(2'-O-methyl-ribonucleotide) in mRNA + S-adenosyl-L-homocysteine + H(+). Its function is as follows. Probable S-adenosyl-L-methionine-dependent methyltransferase that mediates mRNA cap2 2'-O-ribose methylation to the 5'-cap structure of mRNAs. May methylate the ribose of the second nucleotide of a m(7)GpppG-capped mRNA (cap0) to produce m(7)GpppRmpNm (cap2). Regulates expression of tracheal genes required for pathfinding on the segmental nerve. The protein is Cap-specific mRNA (nucleoside-2'-O-)-methyltransferase 2 (cmtr2) of Drosophila melanogaster (Fruit fly).